Reading from the N-terminus, the 396-residue chain is Na(+)/H(+) antiporter NhaA 1 (396 aa).

The next 12 helical transmembrane spans lie at 9–29 (LHNEAASGVLIFLAAVAAMLI), 59–79 (LLLWINDGLMAVFFLLVGLEL), 95–115 (VLPVVGAVGGIVGPALIYVMF), 125–145 (GWAVPTATDIAFAMGVLALLG), 154–174 (LFLLTLAIIDDLVAIVIIAIF), 177–197 (SDLSVGSLTVAGGAIALLFLL), 200–220 (IGVKGIAPYVLVGMVLWVAVL), 223–243 (GVHATLAGVVLAMAIPIKGET), 260–280 (VVGLVILPLFAFANAGVSLAG), 281–301 (LGLNVLLEPVAMGIGLGLLLG), 332–352 (GVALLCGIGFTMSLFISSLAF), and 373–393 (ILSGSLVSGVLGYLVLRFSLA).

It belongs to the NhaA Na(+)/H(+) (TC 2.A.33) antiporter family.

The protein resides in the cell inner membrane. The enzyme catalyses Na(+)(in) + 2 H(+)(out) = Na(+)(out) + 2 H(+)(in). Functionally, na(+)/H(+) antiporter that extrudes sodium in exchange for external protons. The chain is Na(+)/H(+) antiporter NhaA 1 from Magnetococcus marinus (strain ATCC BAA-1437 / JCM 17883 / MC-1).